Here is a 77-residue protein sequence, read N- to C-terminus: Acyl carrier protein (77 aa).

One can recognise a Carrier domain in the interval 2–77; the sequence is SNIEERVKKI…AAIDYVNSAQ (76 aa). The residue at position 37 (Ser37) is an O-(pantetheine 4'-phosphoryl)serine.

This sequence belongs to the acyl carrier protein (ACP) family. In terms of processing, 4'-phosphopantetheine is transferred from CoA to a specific serine of apo-ACP by AcpS. This modification is essential for activity because fatty acids are bound in thioester linkage to the sulfhydryl of the prosthetic group.

It localises to the cytoplasm. The protein operates within lipid metabolism; fatty acid biosynthesis. Carrier of the growing fatty acid chain in fatty acid biosynthesis. The polypeptide is Acyl carrier protein (Vibrio campbellii (strain ATCC BAA-1116)).